The chain runs to 316 residues: Apolipoprotein E (316 aa).

The N-terminal stretch at 1-18 (MKVLWVALVVALLAGCQA) is a signal peptide. Tandem repeats lie at residues 79 to 100 (VLME…GQLA), 101 to 122 (PMAQ…ARLG), 123 to 144 (SDME…AMLG), 145 to 166 (QSTE…KRLL), 167 to 188 (RDAD…EGAE), 189 to 210 (RSVS…SRAA), 211 to 232 (TLST…QKLH), and 233 to 254 (GRLE…QQLE). The tract at residues 79–254 (VLMEETMKEV…RLDKMRQQLE (176 aa)) is 8 X 22 AA approximate tandem repeats. Position 142 is a methionine sulfoxide (methionine 142). Residue serine 146 is modified to Phosphoserine. The interval 157–167 (HLRKLRKRLLR) is LDL and other lipoprotein receptors binding. 161-164 (LRKR) is a heparin binding site. The tract at residues 209–289 (AATLSTQVGQ…SWFEPLVEDM (81 aa)) is lipid-binding and lipoprotein association. 228–235 (RQKLHGRL) is a binding site for heparin. Positions 265-316 (SQIRLQAEAFQARLRSWFEPLVEDMQRQWAGLVEKVQLALHLSPTSPPSENH) are homooligomerization. A specificity for association with VLDL region spans residues 277 to 289 (RLRSWFEPLVEDM).

The protein belongs to the apolipoprotein A1/A4/E family. In terms of assembly, homotetramer. May interact with ABCA1; functionally associated with ABCA1 in the biogenesis of HDLs. May interact with APP/A4 amyloid-beta peptide; the interaction is extremely stable in vitro but its physiological significance is unclear. May interact with MAPT. May interact with MAP2. In the cerebrospinal fluid, interacts with secreted SORL1. Interacts with PMEL; this allows the loading of PMEL luminal fragment on ILVs to induce fibril nucleation. APOE exists as multiple glycosylated and sialylated glycoforms within cells and in plasma. The extent of glycosylation and sialylation are tissue and context specific. Post-translationally, glycated in plasma VLDL. In terms of processing, phosphorylated by FAM20C in the extracellular medium.

It is found in the secreted. The protein resides in the extracellular space. Its subcellular location is the extracellular matrix. It localises to the extracellular vesicle. The protein localises to the endosome. It is found in the multivesicular body. Its function is as follows. APOE is an apolipoprotein, a protein associating with lipid particles, that mainly functions in lipoprotein-mediated lipid transport between organs via the plasma and interstitial fluids. APOE is a core component of plasma lipoproteins and is involved in their production, conversion and clearance. Apolipoproteins are amphipathic molecules that interact both with lipids of the lipoprotein particle core and the aqueous environment of the plasma. As such, APOE associates with chylomicrons, chylomicron remnants, very low density lipoproteins (VLDL) and intermediate density lipoproteins (IDL) but shows a preferential binding to high-density lipoproteins (HDL). It also binds a wide range of cellular receptors including the LDL receptor/LDLR and the very low-density lipoprotein receptor/VLDLR that mediate the cellular uptake of the APOE-containing lipoprotein particles. Finally, APOE also has a heparin-binding activity and binds heparan-sulfate proteoglycans on the surface of cells, a property that supports the capture and the receptor-mediated uptake of APOE-containing lipoproteins by cells. This chain is Apolipoprotein E (APOE), found in Ovis aries (Sheep).